We begin with the raw amino-acid sequence, 257 residues long: Imidazole glycerol phosphate synthase subunit HisF (257 aa).

Residues aspartate 12 and aspartate 131 contribute to the active site.

The protein belongs to the HisA/HisF family. As to quaternary structure, heterodimer of HisH and HisF.

Its subcellular location is the cytoplasm. The catalysed reaction is 5-[(5-phospho-1-deoxy-D-ribulos-1-ylimino)methylamino]-1-(5-phospho-beta-D-ribosyl)imidazole-4-carboxamide + L-glutamine = D-erythro-1-(imidazol-4-yl)glycerol 3-phosphate + 5-amino-1-(5-phospho-beta-D-ribosyl)imidazole-4-carboxamide + L-glutamate + H(+). The protein operates within amino-acid biosynthesis; L-histidine biosynthesis; L-histidine from 5-phospho-alpha-D-ribose 1-diphosphate: step 5/9. Its function is as follows. IGPS catalyzes the conversion of PRFAR and glutamine to IGP, AICAR and glutamate. The HisF subunit catalyzes the cyclization activity that produces IGP and AICAR from PRFAR using the ammonia provided by the HisH subunit. This chain is Imidazole glycerol phosphate synthase subunit HisF, found in Burkholderia ambifaria (strain MC40-6).